We begin with the raw amino-acid sequence, 33 residues long: uncharacterized protein (33 aa).

This is an uncharacterized protein from Staphylococcus aureus (strain N315).